The sequence spans 504 residues: Ribosomal protein uS12 methylthiotransferase RimO (504 aa).

The MTTase N-terminal domain occupies lysine 21–proline 131. [4Fe-4S] cluster-binding residues include cysteine 30, cysteine 66, cysteine 95, cysteine 186, cysteine 190, and cysteine 193. Positions leucine 172–glutamate 408 constitute a Radical SAM core domain. The TRAM domain maps to serine 411–glutamate 487.

This sequence belongs to the methylthiotransferase family. RimO subfamily. Requires [4Fe-4S] cluster as cofactor.

The protein localises to the cytoplasm. It carries out the reaction L-aspartate(89)-[ribosomal protein uS12]-hydrogen + (sulfur carrier)-SH + AH2 + 2 S-adenosyl-L-methionine = 3-methylsulfanyl-L-aspartate(89)-[ribosomal protein uS12]-hydrogen + (sulfur carrier)-H + 5'-deoxyadenosine + L-methionine + A + S-adenosyl-L-homocysteine + 2 H(+). Its function is as follows. Catalyzes the methylthiolation of an aspartic acid residue of ribosomal protein uS12. The chain is Ribosomal protein uS12 methylthiotransferase RimO from Deinococcus radiodurans (strain ATCC 13939 / DSM 20539 / JCM 16871 / CCUG 27074 / LMG 4051 / NBRC 15346 / NCIMB 9279 / VKM B-1422 / R1).